Consider the following 292-residue polypeptide: Protein PHR1-LIKE 3 (292 aa).

The 61-residue stretch at 34–94 folds into the HTH myb-type domain; that stretch reads TDPKPRLRWT…HLQKFRLGRQ (61 aa). Residues 65–90 constitute a DNA-binding region (H-T-H motif); that stretch reads PKTIMRTMGVKGLTLYHLKSHLQKFR. Residues 137–157 adopt a coiled-coil conformation; the sequence is TEALRAQMEVQRRLHEQLEVQ. The LHEQLE motif lies at 150 to 155; sequence LHEQLE.

Belongs to the MYB-CC family. As to quaternary structure, homo- and heterodimers. Interacts with PHL2, but not with PHR1.

Its subcellular location is the nucleus. Transcriptional activator. Probable component of the central regulatory system controlling transcriptional responses to Pi starvation. Binds in a sequence-specific manner to phosphate starvation-regulated promoters. Required for female gametophyte development and function. The polypeptide is Protein PHR1-LIKE 3 (Arabidopsis thaliana (Mouse-ear cress)).